The following is a 394-amino-acid chain: NAD(P)H-quinone oxidoreductase subunit H (394 aa).

The protein belongs to the complex I 49 kDa subunit family. In terms of assembly, NDH-1 can be composed of about 15 different subunits; different subcomplexes with different compositions have been identified which probably have different functions.

Its subcellular location is the cellular thylakoid membrane. It catalyses the reaction a plastoquinone + NADH + (n+1) H(+)(in) = a plastoquinol + NAD(+) + n H(+)(out). The enzyme catalyses a plastoquinone + NADPH + (n+1) H(+)(in) = a plastoquinol + NADP(+) + n H(+)(out). NDH-1 shuttles electrons from an unknown electron donor, via FMN and iron-sulfur (Fe-S) centers, to quinones in the respiratory and/or the photosynthetic chain. The immediate electron acceptor for the enzyme in this species is believed to be plastoquinone. Couples the redox reaction to proton translocation, and thus conserves the redox energy in a proton gradient. Cyanobacterial NDH-1 also plays a role in inorganic carbon-concentration. The chain is NAD(P)H-quinone oxidoreductase subunit H from Prochlorococcus marinus (strain NATL1A).